Here is a 265-residue protein sequence, read N- to C-terminus: Undecaprenyl-diphosphatase (265 aa).

The next 7 helical transmembrane spans lie at 38-58, 75-95, 108-128, 135-155, 181-201, 215-235, and 244-264; these read RSDF…CLAL, RDYV…GLIV, PVAW…HVAG, VVTW…GVFP, FVFM…LLEM, VAVA…WLLS, and VFAV…PAAA.

Belongs to the UppP family.

The protein localises to the cell inner membrane. The enzyme catalyses di-trans,octa-cis-undecaprenyl diphosphate + H2O = di-trans,octa-cis-undecaprenyl phosphate + phosphate + H(+). In terms of biological role, catalyzes the dephosphorylation of undecaprenyl diphosphate (UPP). Confers resistance to bacitracin. The polypeptide is Undecaprenyl-diphosphatase (Xanthomonas oryzae pv. oryzae (strain MAFF 311018)).